The primary structure comprises 310 residues: Tagatose-6-phosphate kinase (310 aa).

It belongs to the carbohydrate kinase PfkB family. LacC subfamily.

The catalysed reaction is D-tagatofuranose 6-phosphate + ATP = D-tagatofuranose 1,6-bisphosphate + ADP + H(+). It participates in carbohydrate metabolism; D-tagatose 6-phosphate degradation; D-glyceraldehyde 3-phosphate and glycerone phosphate from D-tagatose 6-phosphate: step 1/2. This is Tagatose-6-phosphate kinase from Staphylococcus aureus (strain bovine RF122 / ET3-1).